The following is a 582-amino-acid chain: Membrane protein insertase YidC (582 aa).

4 helical membrane passes run 4 to 24, 376 to 396, 446 to 466, and 542 to 562; these read NTVL…YIQQ, IIPN…IIFF, ASGC…FGLF, and FMPL…LLFW.

The protein belongs to the OXA1/ALB3/YidC family. Type 1 subfamily. As to quaternary structure, interacts with the Sec translocase complex via SecD. Specifically interacts with transmembrane segments of nascent integral membrane proteins during membrane integration.

The protein resides in the cell inner membrane. Its function is as follows. Required for the insertion and/or proper folding and/or complex formation of integral membrane proteins into the membrane. Involved in integration of membrane proteins that insert both dependently and independently of the Sec translocase complex, as well as at least some lipoproteins. Aids folding of multispanning membrane proteins. The sequence is that of Membrane protein insertase YidC from Treponema denticola (strain ATCC 35405 / DSM 14222 / CIP 103919 / JCM 8153 / KCTC 15104).